The chain runs to 518 residues: Glutamate--cysteine ligase (518 aa).

Belongs to the glutamate--cysteine ligase type 1 family. Type 1 subfamily.

The catalysed reaction is L-cysteine + L-glutamate + ATP = gamma-L-glutamyl-L-cysteine + ADP + phosphate + H(+). It functions in the pathway sulfur metabolism; glutathione biosynthesis; glutathione from L-cysteine and L-glutamate: step 1/2. This chain is Glutamate--cysteine ligase, found in Citrobacter koseri (strain ATCC BAA-895 / CDC 4225-83 / SGSC4696).